The sequence spans 87 residues: Small ribosomal subunit protein uS15 (87 aa).

It belongs to the universal ribosomal protein uS15 family. In terms of assembly, part of the 30S ribosomal subunit. Forms a bridge to the 50S subunit in the 70S ribosome, contacting the 23S rRNA.

Its function is as follows. One of the primary rRNA binding proteins, it binds directly to 16S rRNA where it helps nucleate assembly of the platform of the 30S subunit by binding and bridging several RNA helices of the 16S rRNA. Functionally, forms an intersubunit bridge (bridge B4) with the 23S rRNA of the 50S subunit in the ribosome. This Clostridium botulinum (strain Eklund 17B / Type B) protein is Small ribosomal subunit protein uS15.